The sequence spans 453 residues: o-phthalyl amidase (453 aa).

Monomer. In terms of processing, the N-terminus is blocked.

It catalyses the reaction a phtalamide + H2O = phthalate + a primary amine. Inhibited by iodoacetate, p-hydroxymercuric benzoate and copper ions. In terms of biological role, catalyzes the removal of the phthalyl group from phthalyl amides generating phthalate and an amine. The enzyme has a broad substrate specificity and hydrolyzes phthalylated amino acids, peptides, beta-lactams, aromatic and aliphatic amines; substitutions allowed on the phthalyl group include 6-F, 6-NH(2), 3-OH, and a nitrogen in the aromatic ring ortho to the carboxy group attached to the amine. The protein is o-phthalyl amidase of Xanthobacter agilis.